Reading from the N-terminus, the 391-residue chain is Outer membrane protein 41 (391 aa).

The first 20 residues, 1 to 20, serve as a signal peptide directing secretion; the sequence is MKVKYLMLTLVGAIALNASA. Gln-21 is subject to Pyrrolidone carboxylic acid. An OmpA-like domain is found at 282–391; the sequence is TKTENILTEK…WNRVVIVRSK (110 aa).

It belongs to the outer membrane OOP (TC 1.B.6) superfamily. Disulfide-linked heterodimer with Omp40.

It localises to the cell outer membrane. May have porin activity and function in peptidoglycan binding. The chain is Outer membrane protein 41 from Porphyromonas gingivalis (strain ATCC BAA-308 / W83).